Here is a 140-residue protein sequence, read N- to C-terminus: Organic hydroperoxide resistance protein-like (140 aa).

It belongs to the OsmC/Ohr family.

This is Organic hydroperoxide resistance protein-like from Staphylococcus aureus (strain USA300).